The following is a 90-amino-acid chain: Major envelope protein (90 aa).

A helical membrane pass occupies residues 53 to 70 (AVSVVSWAVAAGLIGELI).

Its subcellular location is the virion membrane. In terms of biological role, essential for membrane formation. The protein is Major envelope protein (P9) of Pseudomonas savastanoi pv. phaseolicola (Pseudomonas syringae pv. phaseolicola).